A 490-amino-acid chain; its full sequence is MLTNIIILIILYLFYDFCYKNFKYRNYGSPWALPVIGHFIHVINQPHLVVHNDRMKYNNGRFVNYWFGDYLSIAITDPILYKKIYLNFPKQINSRLKSPTVLNISERFRGIISSNENNWDFHHGILSKLFNGHKAKINNFLFEKETKFIIEYMKKISKSGENFDTRSNFLYFYSNILFDYILGKRVENIYENELRKDRKKFMVSIQEVMDSVGLIKFLNYLILSYPFLSIYLRYFTYTTFNLKKILKQYYDEHLETIDLNKPRDVLDNLIMEYKNQNAIECDKSFVAIAIELLAAGTDTNSSTSEWFLTYLVNNPIYQDKIYDELIGALKINKPLKGSDVLINLSHRPLTPLFNATLKEVLRLIPATPFSVPRMSNEGFEVDGIKIPKGTYLFPSMYSIFRDEKYWGENANKFYPERFLTDSHSNNYFPYGVGKRMCLGSNFSQHELYICLTNIVLNFKIKSIDGKPLNEIPNYGITFRPNIFEVKLENR.

The chain crosses the membrane as a helical span at residues Leu-2–Phe-22. Cys-437 is a binding site for heme.

It belongs to the cytochrome P450 family. Heme is required as a cofactor.

The protein resides in the membrane. This chain is Probable cytochrome P450 518B1 (cyp518B1), found in Dictyostelium discoideum (Social amoeba).